The chain runs to 303 residues: Polyisoprenyl-teichoic acid--peptidoglycan teichoic acid transferase TagU (303 aa).

The Cytoplasmic portion of the chain corresponds to 1–4; that stretch reads MKKK. Residues 5–25 form a helical; Signal-anchor for type II membrane protein membrane-spanning segment; the sequence is ILFWVLGILGVLIIGGGIYAY. The Extracellular segment spans residues 26 to 303; it reads NVYSSVSNTL…KLRTHLEVTK (278 aa).

Belongs to the LytR/CpsA/Psr (LCP) family.

It is found in the cell membrane. The protein operates within cell wall biogenesis. Its function is as follows. May catalyze the final step in cell wall teichoic acid biosynthesis, the transfer of the anionic cell wall polymers (APs) from their lipid-linked precursor to the cell wall peptidoglycan (PG). This chain is Polyisoprenyl-teichoic acid--peptidoglycan teichoic acid transferase TagU, found in Bacillus anthracis (strain A0248).